A 608-amino-acid polypeptide reads, in one-letter code: CTP synthase (608 aa).

Residues 1–271 (MGQAHITKHI…DAYVVRRLGL (271 aa)) form an amidoligase domain region. Serine 18 contacts CTP. A UTP-binding site is contributed by serine 18. Residues 19–24 (SLGKGL) and aspartate 76 contribute to the ATP site. Mg(2+) is bound by residues aspartate 76 and glutamate 145. CTP contacts are provided by residues 152–154 (DIE), 192–197 (KTKPTQ), and lysine 228. UTP contacts are provided by residues 192 to 197 (KTKPTQ) and lysine 228. The Glutamine amidotransferase type-1 domain occupies 296-545 (TIAIVGKYVD…VAAAVAHADR (250 aa)). Glycine 359 provides a ligand contact to L-glutamine. Cysteine 386 (nucleophile; for glutamine hydrolysis) is an active-site residue. Residues 387–390 (LGLQ), glutamate 410, and arginine 471 each bind L-glutamine. Residues histidine 518 and glutamate 520 contribute to the active site. Positions 550 to 608 (LPVDLPSEDAPTPENGVPENGAAQTRGVTAGRSGGSIRRGASASRPSVSSNGTAALVSP) are disordered. Over residues 584-594 (GSIRRGASASR) the composition is skewed to low complexity.

This sequence belongs to the CTP synthase family. Homotetramer.

The catalysed reaction is UTP + L-glutamine + ATP + H2O = CTP + L-glutamate + ADP + phosphate + 2 H(+). It carries out the reaction L-glutamine + H2O = L-glutamate + NH4(+). The enzyme catalyses UTP + NH4(+) + ATP = CTP + ADP + phosphate + 2 H(+). Its pathway is pyrimidine metabolism; CTP biosynthesis via de novo pathway; CTP from UDP: step 2/2. With respect to regulation, allosterically activated by GTP, when glutamine is the substrate; GTP has no effect on the reaction when ammonia is the substrate. The allosteric effector GTP functions by stabilizing the protein conformation that binds the tetrahedral intermediate(s) formed during glutamine hydrolysis. Inhibited by the product CTP, via allosteric rather than competitive inhibition. In terms of biological role, catalyzes the ATP-dependent amination of UTP to CTP with either L-glutamine or ammonia as the source of nitrogen. Regulates intracellular CTP levels through interactions with the four ribonucleotide triphosphates. The sequence is that of CTP synthase from Frankia casuarinae (strain DSM 45818 / CECT 9043 / HFP020203 / CcI3).